The primary structure comprises 219 residues: Envelope protein US9 homolog (219 aa).

The Intravirion segment spans residues 1 to 193 (MEKAEAAAVV…RHRRRRVALT (193 aa)). The Di-leucine internalization motif signature appears at 145–146 (LL). The acidic stretch occupies residues 153 to 168 (DYDSESGCYYSESDNE). Ser-163 and Ser-165 each carry phosphoserine; by host CK2. The chain crosses the membrane as a helical; Signal-anchor for type II membrane protein span at residues 194–214 (VAGVILVVVLCAISGIVGAFL). The Virion surface segment spans residues 215–219 (ARVFP).

This sequence belongs to the alphaherpesvirinae envelope protein US9 family. Phosphorylated on serines within the acidic cluster. Phosphorylation determines whether endocytosed viral US9 traffics to the trans-Golgi network or recycles to the cell membrane.

It localises to the virion membrane. The protein resides in the host Golgi apparatus membrane. The protein localises to the host smooth endoplasmic reticulum membrane. It is found in the host cell membrane. Functionally, essential for the anterograde spread of the infection throughout the host nervous system. Together with the gE/gI heterodimer, US9 is involved in the sorting and transport of viral structural components toward axon tips. The polypeptide is Envelope protein US9 homolog (Equine herpesvirus 1 (strain Kentucky A) (EHV-1)).